The following is a 318-amino-acid chain: Epithelial-stromal interaction protein 1 (318 aa).

Positions 1 to 60 (MNTRNRVVNSGLGASPASRPTRDPQDPSGRQGELSPVEDQREGLEAAPKGPSRESVVHAG) are disordered. Coiled coils occupy residues 73 to 188 (NINR…HQQY) and 240 to 280 (LKAE…HQTE).

As to expression, highly expressed in placenta, small intestine, spleen, kidney, thymus, liver, salivary gland and testes. Weakly expressed in breast, skeletal muscle and colon. Highly expressed in breast cancer upon interaction between tumor cells and stromal cells in vitro. Expressed in blood mononuclear cells from patients with systemic lupus erythematosus (SLE).

Plays a role in M1 macrophage polarization and is required for the proper regulation of gene expression during M1 versus M2 macrophage differentiation. Might play a role in RELA/p65 and STAT1 phosphorylation and nuclear localization upon activation of macrophages. In Homo sapiens (Human), this protein is Epithelial-stromal interaction protein 1 (EPSTI1).